The primary structure comprises 113 residues: Protein FMC1 homolog (113 aa).

The interval 94–113 is disordered; sequence SAGLVGLQLPHQPGGKGWEP.

It belongs to the FMC1 family. As to quaternary structure, interacts with ATPAF2.

The protein resides in the mitochondrion. Functionally, plays a role in the assembly/stability of the mitochondrial membrane ATP synthase (F(1)F(0) ATP synthase or Complex V). This Rattus norvegicus (Rat) protein is Protein FMC1 homolog.